Consider the following 123-residue polypeptide: Non-specific lipid-transfer protein (123 aa).

The signal sequence occupies residues 1-25 (MAVKKMVEAVFVVGLVVTMMNVWGA). 4 cysteine pairs are disulfide-bonded: C34–C82, C44–C59, C60–C104, and C80–C119.

Belongs to the plant LTP family.

In terms of biological role, plant non-specific lipid-transfer proteins transfer phospholipids as well as galactolipids across membranes. May play a role in wax or cutin deposition in the cell walls of expanding epidermal cells and certain secretory tissues. The sequence is that of Non-specific lipid-transfer protein from Pinus taeda (Loblolly pine).